Reading from the N-terminus, the 100-residue chain is Small ribosomal subunit protein uS14c (100 aa).

This sequence belongs to the universal ribosomal protein uS14 family. As to quaternary structure, part of the 30S ribosomal subunit.

The protein localises to the plastid. The protein resides in the chloroplast. Binds 16S rRNA, required for the assembly of 30S particles. This chain is Small ribosomal subunit protein uS14c, found in Chlamydomonas reinhardtii (Chlamydomonas smithii).